Consider the following 366-residue polypeptide: Palmitoyltransferase ZDHHC2 (366 aa).

Over 1–15 (MAPSGPGGVRRRCRR) the chain is Cytoplasmic. The chain crosses the membrane as a helical span at residues 16-36 (VLYWIPVVFISLLLGWSYYAY). The Lumenal segment spans residues 37–47 (AIQLCIVSMEN). A helical membrane pass occupies residues 48–68 (IGEQVVCLMAYHLLFAMFVWS). Residues 69–169 (YWKTIFTLPM…NNCVGFSNYK (101 aa)) are Cytoplasmic-facing. The DHHC domain occupies 126–176 (RYCDRCRLIKPDRCHHCSVCDKCILKMDHHCPWVNNCVGFSNYKFFLLFLA). The active-site S-palmitoyl cysteine intermediate is the C156. A helical membrane pass occupies residues 170–190 (FFLLFLAYSLLYCLFIAATDL). Topologically, residues 191–207 (QYFIRFWTNGLPDTQAK) are lumenal. The helical transmembrane segment at 208–228 (FHIMFLFFAAAMFSVSLSSLF) threads the bilayer. Residues 229–366 (GYHCWLVSKN…NPALTMENET (138 aa)) lie on the Cytoplasmic side of the membrane. 2 stretches are compositionally biased toward polar residues: residues 297–316 (VNQDPEQPSTPAGLNSTAKN) and 332–349 (SHLLTDSQTWTENSSNSG). A disordered region spans residues 297–366 (VNQDPEQPST…NPALTMENET (70 aa)). Positions 298–366 (NQDPEQPSTP…NPALTMENET (69 aa)) are mediates localization to plasma membrane and recycling endosomes. Positions 334-335 (LL) match the Non-canonical dileucine endocytic signal motif. The NPxY-like endocytic signal signature appears at 357–360 (NPAL).

Belongs to the DHHC palmitoyltransferase family. Monomer. Homodimer. The monomeric form has a higher catalytic activity. In terms of processing, autopalmitoylated.

The protein resides in the postsynaptic density. Its subcellular location is the postsynaptic recycling endosome membrane. It is found in the cell membrane. It localises to the endoplasmic reticulum membrane. The protein localises to the golgi apparatus membrane. It carries out the reaction L-cysteinyl-[protein] + hexadecanoyl-CoA = S-hexadecanoyl-L-cysteinyl-[protein] + CoA. The catalysed reaction is L-cysteinyl-[protein] + tetradecanoyl-CoA = S-tetradecanoyl-L-cysteinyl-[protein] + CoA. It catalyses the reaction L-cysteinyl-[protein] + octadecanoyl-CoA = S-octadecanoyl-L-cysteinyl-[protein] + CoA. Functionally, palmitoyltransferase that catalyzes the addition of palmitate onto various protein substrates and is involved in a variety of cellular processes. Has no stringent fatty acid selectivity and in addition to palmitate can also transfer onto target proteins myristate from tetradecanoyl-CoA and stearate from octadecanoyl-CoA. In the nervous system, plays a role in long term synaptic potentiation by palmitoylating AKAP5 through which it regulates protein trafficking from the dendritic recycling endosomes to the plasma membrane and controls both structural and functional plasticity at excitatory synapses. In dendrites, mediates the palmitoylation of DLG4 when synaptic activity decreases and induces synaptic clustering of DLG4 and associated AMPA-type glutamate receptors. Also mediates the de novo and turnover palmitoylation of RGS7BP, a shuttle for Gi/o-specific GTPase-activating proteins/GAPs, promoting its localization to the plasma membrane in response to the activation of G protein-coupled receptors. Through the localization of these GTPase-activating proteins/GAPs, it also probably plays a role in G protein-coupled receptors signaling in neurons. Also probably plays a role in cell adhesion by palmitoylating CD9 and CD151 to regulate their expression and function. Palmitoylates the endoplasmic reticulum protein CKAP4 and regulates its localization to the plasma membrane. Could also palmitoylate LCK and regulate its localization to the plasma membrane. The polypeptide is Palmitoyltransferase ZDHHC2 (Rattus norvegicus (Rat)).